Reading from the N-terminus, the 267-residue chain is Indole-3-glycerol phosphate synthase (267 aa).

The protein belongs to the TrpC family.

It carries out the reaction 1-(2-carboxyphenylamino)-1-deoxy-D-ribulose 5-phosphate + H(+) = (1S,2R)-1-C-(indol-3-yl)glycerol 3-phosphate + CO2 + H2O. The protein operates within amino-acid biosynthesis; L-tryptophan biosynthesis; L-tryptophan from chorismate: step 4/5. The chain is Indole-3-glycerol phosphate synthase from Deinococcus radiodurans (strain ATCC 13939 / DSM 20539 / JCM 16871 / CCUG 27074 / LMG 4051 / NBRC 15346 / NCIMB 9279 / VKM B-1422 / R1).